The following is a 437-amino-acid chain: Trigger factor (437 aa).

The region spanning 174–260 (GDFVQISFEG…VKSLKKKIFP (87 aa)) is the PPIase FKBP-type domain.

Belongs to the FKBP-type PPIase family. Tig subfamily.

It is found in the cytoplasm. It carries out the reaction [protein]-peptidylproline (omega=180) = [protein]-peptidylproline (omega=0). Involved in protein export. Acts as a chaperone by maintaining the newly synthesized protein in an open conformation. Functions as a peptidyl-prolyl cis-trans isomerase. The protein is Trigger factor of Koribacter versatilis (strain Ellin345).